The following is a 577-amino-acid chain: Phosphoethanolamine transferase EptC (577 aa).

The next 5 helical transmembrane spans lie at 17-37, 44-64, 69-89, 119-139, and 154-174; these read LGWALLYFWFFSTLLQAIIYI, NGIRDSLLFSSLWLIPVFLFP, IIAAVIGVVLWAASLAALCYY, YFSLKIVLIALAYTAVAVLLW, and VVSFALLYGLILHPIAMNTFI.

This sequence belongs to the phosphoethanolamine transferase family. EptC/CptA subfamily. In terms of assembly, forms a complex with an unidentified protein of approximately 36 kDa.

Its subcellular location is the cell inner membrane. Its pathway is bacterial outer membrane biogenesis; LPS core biosynthesis. Catalyzes the addition of a phosphoethanolamine moiety to the outer membrane lipopolysaccharide core. This chain is Phosphoethanolamine transferase EptC (eptC), found in Escherichia coli (strain K12).